The following is a 268-amino-acid chain: Small ribosomal subunit protein uS3 (268 aa).

The KH type-2 domain occupies 39-107 (VREYLKKKLK…PVHVNIEEIR (69 aa)). A disordered region spans residues 216 to 268 (VEEVAEEKRPRRNARPGGDRRPRRDGEGGGPAGARRGAPRRAGGAGGDGKTGE). Residues 232–242 (GGDRRPRRDGE) are compositionally biased toward basic and acidic residues. Positions 248–257 (GARRGAPRRA) are enriched in low complexity. The span at 258–268 (GGAGGDGKTGE) shows a compositional bias: gly residues.

The protein belongs to the universal ribosomal protein uS3 family. Part of the 30S ribosomal subunit. Forms a tight complex with proteins S10 and S14.

Binds the lower part of the 30S subunit head. Binds mRNA in the 70S ribosome, positioning it for translation. This chain is Small ribosomal subunit protein uS3, found in Paraburkholderia phytofirmans (strain DSM 17436 / LMG 22146 / PsJN) (Burkholderia phytofirmans).